A 223-amino-acid polypeptide reads, in one-letter code: Capsid protein (223 aa).

Basic and acidic residues predominate over residues 1–19; it reads MDDETKKLKNKNKETKEGD. A disordered region spans residues 1–21; sequence MDDETKKLKNKNKETKEGDDV.

Belongs to the closteroviridae capsid protein family. In terms of processing, consists of at least two size variants, CP1 and CP2, which result of post-translational proteolysis at sites approximately 12 to 15 and 26 AA from the N-terminus respectively.

The protein resides in the virion. This Citrus tristeza virus (isolate T36) (CTV) protein is Capsid protein.